The sequence spans 188 residues: Type II secretion system protein H (188 aa).

The propeptide at 1 to 10 (MKRSTRKQQG) is leader sequence. Phe-11 bears the N-methylphenylalanine mark. The chain crosses the membrane as a helical span at residues 13–35 (LLEMMLVVLLAGIAAGMVVMAFP).

The protein belongs to the GSP H family. Type II secretion is composed of four main components: the outer membrane complex, the inner membrane complex, the cytoplasmic secretion ATPase and the periplasm-spanning pseudopilus. Interacts with core component OutG. In terms of processing, cleaved by prepilin peptidase. Methylated by prepilin peptidase at the amino group of the N-terminal phenylalanine once the leader sequence is cleaved by prepilin peptidase.

The protein resides in the cell inner membrane. Functionally, component of the type II secretion system required for the energy-dependent secretion of extracellular factors such as proteases and toxins from the periplasm. Part of the pseudopilus tip complex that is critical for the recognition and binding of secretion substrates. This is Type II secretion system protein H (outH) from Pectobacterium carotovorum subsp. carotovorum (Erwinia carotovora subsp. carotovora).